A 1182-amino-acid chain; its full sequence is IQ motif and SEC7 domain-containing protein 3 (1182 aa).

Positions 20 to 56 (AIVQNQQSLIHTQRERIDELERRLDELSAENRSLWEH) form a coiled coil. 2 disordered regions span residues 62–157 (AQPP…ERPP) and 230–275 (AAGR…RQQP). Over residues 63–78 (QPPPGLVPPSSAPLPA) the composition is skewed to pro residues. Low complexity-rich tracts occupy residues 79 to 105 (APAT…AAAP) and 254 to 263 (GAGAASPRAG). Ser259 bears the Phosphoserine mark. Residues 315 to 344 (SRRAACTIQTAFRQYQLSKNFEKIRNSLLE) form the IQ domain. 2 disordered regions span residues 444-479 (AGPP…AHSG) and 521-616 (EPAA…ASAS). Positions 533 to 548 (SGREAPEAPAVGREDA) are enriched in basic and acidic residues. Low complexity predominate over residues 555–569 (AEAAASGAADGATAP). Residues 572-581 (EEEEEEEETA) are compositionally biased toward acidic residues. Over residues 598 to 616 (SSSSTSTKSAKSGSEASAS) the composition is skewed to low complexity. The 194-residue stretch at 644 to 837 (TLSTDTLRKR…VGIYERIQQK (194 aa)) folds into the SEC7 domain. Positions 850–983 (TKVEKSIVGM…LKESIAEVTE (134 aa)) constitute a PH domain. Residues 964-992 (SDEMQKFVEDLKESIAEVTELEQIRIEWE) are a coiled coil. 2 disordered regions span residues 1002–1090 (LSFK…PGTL) and 1121–1182 (YTSS…RSLV). Positions 1022–1033 (AKREAALRERPA) are enriched in basic and acidic residues. Residues 1043–1052 (NRLQTSQHNS) show a composition bias toward polar residues. Residues 1061–1087 (PVPPPDLQPSPPRQQTPPLPPPPPTPP) are compositionally biased toward pro residues. Positions 1121 to 1132 (YTSSSSDSCGST) are enriched in low complexity. Residues 1147 to 1157 (PPLPPPPPPYN) are compositionally biased toward pro residues.

The protein belongs to the BRAG family. As to quaternary structure, interacts with DLG1 and DLG4. Interacts with GPHN. Expressed specifically in the adult brain, predominantly in the cerebral cortex and the olfactory bulb, but not in the fetal brain. Expressed only in mature neurons, but not in undifferentiated neural stem precursor cells (NSPCs), nor in glioma cells.

It localises to the cytoplasm. The protein resides in the postsynaptic density. In terms of biological role, acts as a guanine nucleotide exchange factor (GEF) for ARF1. In Homo sapiens (Human), this protein is IQ motif and SEC7 domain-containing protein 3 (IQSEC3).